A 641-amino-acid polypeptide reads, in one-letter code: MSASANLANVYAELMRRCGESYTITYGAPPTYLVSMVGAAEAGKKIVLVFKEDRNGAVARLRTTPTRAAPKKEGSADLDLTGSPLKDDCLVDAIADLSIDLQLDHSNPWKLEEEYQRGIPVDKARSIVCSEFLQLAEGLGSVWFLCDGSDLGQTQLLQYEFNPTHFSRGILSYQGVRPAYLVTSQALVRHHGKTPDETLIENSYQVNPHMRLRCSWTSSAALPLLVNLNDCDVALNHTFRVGDCGPLTQDFMNQLRILVYIREDIVSYHTDVKQGVSRDPTYRCGSGIDMDELRESINQTMTDVSGLIGRYSISNAEFDIEDVVQRAKVRQLTDLTDKLWELLKCCHSYKDLKIAFSMLFQCAARCNIVNTPTNKNRLAKIITELANRRLAMPCLSGAEPLELLLEIGLEKLYKDYEFIYTESKMCSTNLLKDDSSGASMDDGSPQNLPQLRKSLHNAVRGDPTPGAGMRKTLLHHHGAVNSRSTKYAGSDDDAGFKNSHFDEHESTERISKLFQIHCTLEHLLMMHIHLNLANVYNDVCSELLKKPPKLVESIDDQLSDVMDIRLSAHYVRDHLDGKDPYSRHITMRSHNKFRELKTTFYFNSENICPPNLAQCFQCDDKEMVKERTYHSWIYHKIRSLK.

At serine 312 the chain carries Phosphoserine.

Belongs to the ZWILCH family. As to quaternary structure, component of the RZZ complex composed of rod, Zw10 and Zwilch.

It localises to the cytoplasm. Its subcellular location is the chromosome. The protein localises to the centromere. The protein resides in the kinetochore. It is found in the cytoskeleton. It localises to the spindle. Functionally, essential component of the mitotic checkpoint, which prevents cells from prematurely exiting mitosis. Required for the assembly of the dynein-dynactin, Mad2 complexes and spindly/CG15415 onto kinetochores. Its function related to the spindle assembly machinery is proposed to depend on its association in the RZZ complex. Failure to assemble the complex due to the absence of any one of its components, results in the incorrect redistribution of the remaining components to diverse membrane compartments. This is Protein zwilch from Drosophila melanogaster (Fruit fly).